Here is a 422-residue protein sequence, read N- to C-terminus: Serine protease HTRA2, mitochondrial (422 aa).

A mitochondrion-targeting transit peptide spans Met1–Ile17. Positions Ala18–Gly74 are excised as a propeptide. Residues Gln33–Glu55 form a disordered region. Positions Asn42–Asn53 are enriched in low complexity. Residues Leu64–Ile82 traverse the membrane as a helical segment. 2 consecutive short sequence motifs (IAP-binding) follow at residues Ala75 to Ser78 and Ser94 to Thr97. The segment at Ser139–Leu302 is serine protease. Residues His157, Asp189, and Ser266 each act as charge relay system in the active site. One can recognise a PDZ domain in the interval Met325–Val410.

Belongs to the peptidase S1C family. As to quaternary structure, interacts with th/DIAP1 (via BIR 2 domain).

It is found in the mitochondrion intermembrane space. The protein localises to the mitochondrion membrane. It carries out the reaction Cleavage of non-polar aliphatic amino-acids at the P1 position, with a preference for Val, Ile and Met. At the P2 and P3 positions, Arg is selected most strongly with a secondary preference for other hydrophilic residues.. In terms of biological role, serine protease that shows proteolytic activity against a non-specific substrate beta-casein. Promotes or induces cell death either by direct binding to and inhibition of BIRC proteins (also called inhibitor of apoptosis proteins, IAPs), leading to an increase in caspase activity, or by a BIRC inhibition-independent, caspase-independent and serine protease activity-dependent mechanism. Can antagonize antiapoptotic activity of th/Diap1 by directly inducing the degradation of th/Diap1. The sequence is that of Serine protease HTRA2, mitochondrial from Drosophila simulans (Fruit fly).